A 456-amino-acid polypeptide reads, in one-letter code: MNSRLQEIRARQTLRRKLLAQQLGAESADSIGAVLNSKDEQREIAETRETSRASYDTSATVSKRKMPEEGEADEEVIEECKDAVEPQKEEENLPYREEIYKDSSTFLKGTQSLNPHNDYCQHFVDTGHRPQNFIRDVGLADRFEEYPKLRELIRLKDELISKSNTPPMYLQADLESFDLRELKSEFDVILLEPPLEEYFRETGIAANEKWWTWEDIMKLDIEGIAGSRAFVFLWCGSGEGLDFGRMCLRKWGFRRSEDICWIKTNKDNPGKTKTLDPKAIFQRTKEHCLMGIKGTVHRSTDGDFIHANVDIDLIITEEPEIGNIEKPVEIFHIIEHFCLGRRRLHLFGRDSTIRPGWLTVGPTLTNSNFNSETYASYFNTPNSPLTGCTEEIERLRPKTPPPKSDRGFGASRGGGRGGPSAGRGERGRERNRGSFRGDRGNFRGRGGPHRGVFAPR.

The span at 39–51 (DEQREIAETRETS) shows a compositional bias: basic and acidic residues. The tract at residues 39–74 (DEQREIAETRETSRASYDTSATVSKRKMPEEGEADE) is disordered. The segment covering 52–61 (RASYDTSATV) has biased composition (polar residues). Interaction with METTL3 stretches follow at residues 135–136 (RD) and 237–238 (SG). The positively charged region required for RNA-binding stretch occupies residues 245-254 (RMCLRKWGFR). Interaction with METTL3 stretches follow at residues 255 to 258 (RSED) and 278 to 287 (KAIFQRTKEH). The interval 297–298 (HR) is positively charged region required for RNA-binding. The tract at residues 308 to 312 (NVDID) is interaction with METTL3. Residues 395–456 (LRPKTPPPKS…GPHRGVFAPR (62 aa)) form a disordered region. Over residues 410 to 421 (ASRGGGRGGPSA) the composition is skewed to gly residues. Basic and acidic residues predominate over residues 423–441 (RGERGRERNRGSFRGDRGN).

This sequence belongs to the MT-A70-like family. In terms of assembly, heterodimer; heterodimerizes with mettl3 to form an antiparallel heterodimer that constitutes an active methyltransferase. Component of the WMM complex, a N6-methyltransferase complex composed of a catalytic subcomplex, named MAC, and of an associated subcomplex, named MACOM. The MAC subcomplex is composed of mettl3 and mettl14.

The protein localises to the nucleus. The METTL3-METTL14 heterodimer forms a N6-methyltransferase complex that methylates adenosine residues at the N(6) position of some mRNAs and regulates the circadian clock, differentiation of embryonic stem cells and cortical neurogenesis. In the heterodimer formed with mettl3, mettl14 constitutes the RNA-binding scaffold that recognizes the substrate rather than the catalytic core. N6-methyladenosine (m6A), which takes place at the 5'-[AG]GAC-3' consensus sites of some mRNAs, plays a role in mRNA stability and processing. The polypeptide is N(6)-adenosine-methyltransferase non-catalytic subunit METTL14 (mettl14) (Xenopus tropicalis (Western clawed frog)).